The following is a 378-amino-acid chain: Dual-specificity RNA methyltransferase RlmN (378 aa).

The Proton acceptor role is filled by glutamate 96. Residues 102-340 (DNGRGTLCVS…ATVRTTRGDD (239 aa)) form the Radical SAM core domain. Cysteine 109 and cysteine 345 are disulfide-bonded. Residues cysteine 116, cysteine 120, and cysteine 123 each contribute to the [4Fe-4S] cluster site. S-adenosyl-L-methionine contacts are provided by residues 170–171 (GE), serine 202, 224–226 (SLH), and asparagine 302. Catalysis depends on cysteine 345, which acts as the S-methylcysteine intermediate.

It belongs to the radical SAM superfamily. RlmN family. [4Fe-4S] cluster serves as cofactor.

The protein localises to the cytoplasm. The enzyme catalyses adenosine(2503) in 23S rRNA + 2 reduced [2Fe-2S]-[ferredoxin] + 2 S-adenosyl-L-methionine = 2-methyladenosine(2503) in 23S rRNA + 5'-deoxyadenosine + L-methionine + 2 oxidized [2Fe-2S]-[ferredoxin] + S-adenosyl-L-homocysteine. The catalysed reaction is adenosine(37) in tRNA + 2 reduced [2Fe-2S]-[ferredoxin] + 2 S-adenosyl-L-methionine = 2-methyladenosine(37) in tRNA + 5'-deoxyadenosine + L-methionine + 2 oxidized [2Fe-2S]-[ferredoxin] + S-adenosyl-L-homocysteine. Specifically methylates position 2 of adenine 2503 in 23S rRNA and position 2 of adenine 37 in tRNAs. m2A2503 modification seems to play a crucial role in the proofreading step occurring at the peptidyl transferase center and thus would serve to optimize ribosomal fidelity. In Hahella chejuensis (strain KCTC 2396), this protein is Dual-specificity RNA methyltransferase RlmN.